Here is a 686-residue protein sequence, read N- to C-terminus: Protein MxiA (686 aa).

6 helical membrane passes run L28–F52, F105–I129, A197–M216, I232–V256, I274–G292, and F299–Y315.

The protein belongs to the FHIPEP (flagella/HR/invasion proteins export pore) family.

It is found in the cell inner membrane. Functionally, necessary for the secretion of IPA invasins. The sequence is that of Protein MxiA (mxiA) from Shigella flexneri.